The primary structure comprises 315 residues: tRNA dimethylallyltransferase (315 aa).

18–25 (GPTASGKT) contacts ATP. 20 to 25 (TASGKT) contacts substrate. Interaction with substrate tRNA stretches follow at residues 43–46 (DSAL), 167–171 (QRLSR), and 248–253 (RCVGYR).

Belongs to the IPP transferase family. As to quaternary structure, monomer. Mg(2+) serves as cofactor.

The catalysed reaction is adenosine(37) in tRNA + dimethylallyl diphosphate = N(6)-dimethylallyladenosine(37) in tRNA + diphosphate. Functionally, catalyzes the transfer of a dimethylallyl group onto the adenine at position 37 in tRNAs that read codons beginning with uridine, leading to the formation of N6-(dimethylallyl)adenosine (i(6)A). The chain is tRNA dimethylallyltransferase from Pseudoalteromonas atlantica (strain T6c / ATCC BAA-1087).